Here is a 218-residue protein sequence, read N- to C-terminus: Glutathione S-transferase Mu 1 (218 aa).

Residues Pro-2 to Gly-88 form the GST N-terminal domain. Tyr-7–Trp-8 is a glutathione binding site. Thr-34 is modified (phosphothreonine). Residues Arg-43–Trp-46, Lys-50, Asn-59–Leu-60, and Gln-72–Ser-73 contribute to the glutathione site. Residues Thr-90 to Leu-208 enclose the GST C-terminal domain. Tyr-116 contacts substrate.

Belongs to the GST superfamily. Mu family. As to quaternary structure, homodimer.

It localises to the cytoplasm. It carries out the reaction RX + glutathione = an S-substituted glutathione + a halide anion + H(+). The catalysed reaction is prostaglandin A2 + glutathione = prostaglandin A2-S-(R)-glutathione. It catalyses the reaction prostaglandin J2 + glutathione = prostaglandin J2-S-(R)-glutathione. The enzyme catalyses prostaglandin J2 + glutathione = prostaglandin J2-S-(S)-glutathione. It carries out the reaction prostaglandin A2 + glutathione = prostaglandin A2-S-(S)-glutathione. The catalysed reaction is 11(S)-hydroxy-14(S),15(S)-epoxy-(5Z,8Z,12E)-eicosatrienoate + glutathione = (11S,15S)-dihydroxy-14(R)-S-glutathionyl-(5Z,8Z,12E)-eicosatrienoate. Its function is as follows. Conjugation of reduced glutathione to a wide number of exogenous and endogenous hydrophobic electrophiles. Involved in the formation of glutathione conjugates of both prostaglandin A2 (PGA2) and prostaglandin J2 (PGJ2). Participates in the formation of novel hepoxilin regioisomers. This Macaca fascicularis (Crab-eating macaque) protein is Glutathione S-transferase Mu 1 (GSTM1).